Here is an 833-residue protein sequence, read N- to C-terminus: DNA gyrase subunit A (833 aa).

Positions 34 to 500 (LPDVRDGLKP…AGDVRDIEDI (467 aa)) constitute a Topo IIA-type catalytic domain. The active-site O-(5'-phospho-DNA)-tyrosine intermediate is Y122. The GyrA-box signature appears at 527-533 (QKRGGQG).

This sequence belongs to the type II topoisomerase GyrA/ParC subunit family. In terms of assembly, heterotetramer, composed of two GyrA and two GyrB chains. In the heterotetramer, GyrA contains the active site tyrosine that forms a transient covalent intermediate with DNA, while GyrB binds cofactors and catalyzes ATP hydrolysis.

It is found in the cytoplasm. The enzyme catalyses ATP-dependent breakage, passage and rejoining of double-stranded DNA.. Functionally, a type II topoisomerase that negatively supercoils closed circular double-stranded (ds) DNA in an ATP-dependent manner to modulate DNA topology and maintain chromosomes in an underwound state. Negative supercoiling favors strand separation, and DNA replication, transcription, recombination and repair, all of which involve strand separation. Also able to catalyze the interconversion of other topological isomers of dsDNA rings, including catenanes and knotted rings. Type II topoisomerases break and join 2 DNA strands simultaneously in an ATP-dependent manner. The sequence is that of DNA gyrase subunit A from Chlamydia muridarum (strain MoPn / Nigg).